We begin with the raw amino-acid sequence, 164 residues long: Putative glutamine amidotransferase-like protein RP713 (164 aa).

Positions 39 to 164 (TIANPNSLFM…VITVKIIIYM (126 aa)) constitute a Glutamine amidotransferase type-1 domain.

This Rickettsia prowazekii (strain Madrid E) protein is Putative glutamine amidotransferase-like protein RP713.